The primary structure comprises 228 residues: Transcription repressor OFP8 (228 aa).

Composition is skewed to low complexity over residues 1 to 14, 54 to 79, and 92 to 101; these read MSGRSSRRGSFSLR, ASSTSTTTAFTATTGGAGTATSTDSS, and EEPAAAQQEQ. Disordered stretches follow at residues 1 to 21 and 36 to 143; these read MSGRSSRRGSFSLRQPPVVDI and SSSS…QLQE. Over residues 107–120 the composition is skewed to basic residues; it reads RRRRRQQRRRRRRA. The 60-residue stretch at 157–216 folds into the OVATE domain; the sequence is VAVESAEPYEDFRESMVQMVVEKEIYAWDDLNDLLHQFLSLNSPRHHPLILHAFADLWTR.

As to quaternary structure, interacts with GSK2. In terms of processing, phosphorylated on serine and threonine residues by GSK2. Dephosphorylated during response to brassinosteroid. In terms of tissue distribution, expressed in roots, stems, stem nodes, young leaves, leaf sheaths, lamina joints, young spikelets, inflorescences, stamens and ovaries, embryos and seeds.

The protein localises to the nucleus. Its subcellular location is the cytoplasm. In terms of biological role, probable transcriptional repressor that regulates multiple aspects of plant growth and development, partly through brassinosteroid (BR) signaling pathway. Acts downstream of the kinase GSK2, a negative regulator of BR signaling. In Oryza sativa subsp. japonica (Rice), this protein is Transcription repressor OFP8.